A 402-amino-acid polypeptide reads, in one-letter code: Selenoprotein P (402 aa).

Positions 1 to 19 (MWRGLGLALALCLLLTGGT) are cleaved as a signal peptide. Residue selenocysteine 59 is a non-standard amino acid, selenocysteine. Asparagine 83 and asparagine 174 each carry an N-linked (GlcNAc...) asparagine glycan. The tract at residues 196-291 (KTAEASQRHH…VGSESLQPSL (96 aa)) is disordered. A compositionally biased stretch (basic residues) spans 203–231 (RHHHPHPHSHPHPHPHPHPHPHPHPHHGH). 13 repeat units span residues 204 to 205 (HH), 206 to 207 (HP), 208 to 209 (HP), 210 to 211 (HS), 212 to 213 (HP), 214 to 215 (HP), 216 to 217 (HP), 218 to 219 (HP), 220 to 221 (HP), 222 to 223 (HP), 224 to 225 (HP), 226 to 227 (HP), and 228 to 229 (HH). A 13 X 2 AA tandem repeats of H-[PHS] region spans residues 204–229 (HHHPHPHSHPHPHPHPHPHPHPHPHH). Over residues 232 to 247 (QLHENAHLSESPKPDT) the composition is skewed to basic and acidic residues. Residues 259–269 (LHHHHHRHKGP) show a composition bias toward basic residues. A Phosphoserine modification is found at serine 284. 11 non-standard amino acids (selenocysteine) are found at residues selenocysteine 297, selenocysteine 307, selenocysteine 338, selenocysteine 350, selenocysteine 363, selenocysteine 365, selenocysteine 372, selenocysteine 388, selenocysteine 390, selenocysteine 397, and selenocysteine 399. The tract at residues 367 to 402 (LPPAAUQAAGQQLNPTEASTKUSUKNKAKMUKUPSN) is disordered.

The protein belongs to the selenoprotein P family. Post-translationally, phosphorylation sites are present in the extracellular medium. In terms of tissue distribution, brain and kidney. Most prominently expressed in the cerebellar cortex, hippocampus and olfactory bulb.

The protein localises to the secreted. In terms of biological role, constitutes a major selenium pool in the brain and may play an important role in developing and/or modulating the morphology of neurons and/or glial cells. The chain is Selenoprotein P from Bos taurus (Bovine).